The following is an 854-amino-acid chain: Transcription factor asR3 (854 aa).

A DNA-binding region (zn(2)-C6 fungal-type) is located at residues 19-45 (CWECRRRKIKCDRNDPCAHCIRHETQC). Residues 56-156 (TDSDVSRTRP…SLSTNTSPSA (101 aa)) form a disordered region. 2 stretches are compositionally biased toward polar residues: residues 78-90 (ASGSNSAVATRPS) and 125-145 (LNPSQDVSAPSTQVLQPSSRG). The span at 146–156 (PSLSTNTSPSA) shows a compositional bias: low complexity.

It localises to the nucleus. Its function is as follows. Transcription factor; part of the gene cluster that mediates the biosynthesis of xenovulene A, an unusual meroterpenoid that has potent inhibitory effects on the human gamma-aminobutyrate A (GABAA) benzodiazepine receptor. The polypeptide is Transcription factor asR3 (Sarocladium schorii (Acremonium strictum (strain IMI 501407))).